The following is a 126-amino-acid chain: UPF0102 protein BCAN_A0183 (126 aa).

Belongs to the UPF0102 family.

In Brucella canis (strain ATCC 23365 / NCTC 10854 / RM-666), this protein is UPF0102 protein BCAN_A0183.